Reading from the N-terminus, the 197-residue chain is RNA pyrophosphohydrolase (197 aa).

The Nudix hydrolase domain maps to Gly6 to Ser154. The Nudix box signature appears at Gly38–Gly59.

The protein belongs to the Nudix hydrolase family. RppH subfamily. A divalent metal cation is required as a cofactor.

In terms of biological role, accelerates the degradation of transcripts by removing pyrophosphate from the 5'-end of triphosphorylated RNA, leading to a more labile monophosphorylated state that can stimulate subsequent ribonuclease cleavage. The sequence is that of RNA pyrophosphohydrolase from Polynucleobacter necessarius subsp. necessarius (strain STIR1).